A 561-amino-acid chain; its full sequence is Zinc finger protein 37A (561 aa).

The KRAB domain maps to 8–79 (VSFRDVTVGF…EEKFPSQSHL (72 aa)). The C2H2-type 1; degenerate zinc-finger motif lies at 146–168 (FEYNECGKAFPENSLFLVHKRGY). The C2H2-type 2; degenerate zinc-finger motif lies at 243-265 (IEYNECGTFFSEKLVLHLQQRTH). 10 C2H2-type zinc fingers span residues 271–293 (YECH…QRTH), 299–321 (YECH…QRIH), 327–349 (YGCH…QRTH), 355–377 (YECH…QKTH), 383–405 (YECY…QRIH), 411–433 (YECN…LRTH), 439–461 (YECI…LRRH), 467–489 (FGCN…QRTH), 495–517 (YGCN…HRTH), and 523–545 (YECN…QRIH).

This sequence belongs to the krueppel C2H2-type zinc-finger protein family.

The protein resides in the nucleus. Functionally, may be involved in transcriptional regulation. In Homo sapiens (Human), this protein is Zinc finger protein 37A (ZNF37A).